Reading from the N-terminus, the 494-residue chain is Alpha-amylase-related protein (494 aa).

The N-terminal stretch at 1–20 (MFKFASAVILCLVAASSTQA) is a signal peptide. Glutamine 21 carries the pyrrolidone carboxylic acid modification. A disulfide bridge links cysteine 48 with cysteine 104. Residues asparagine 118, glutamine 169, and aspartate 178 each contribute to the Ca(2+) site. An intrachain disulfide couples cysteine 157 to cysteine 171. A chloride-binding site is contributed by arginine 206. The active-site Nucleophile is aspartate 208. Histidine 212 contacts Ca(2+). Glutamate 245 serves as the catalytic Proton donor. Asparagine 308 and arginine 343 together coordinate chloride. Intrachain disulfides connect cysteine 376-cysteine 382, cysteine 418-cysteine 441, and cysteine 448-cysteine 460.

Belongs to the glycosyl hydrolase 13 family. As to quaternary structure, monomer. The cofactor is Ca(2+). Chloride serves as cofactor.

Its subcellular location is the secreted. The enzyme catalyses Endohydrolysis of (1-&gt;4)-alpha-D-glucosidic linkages in polysaccharides containing three or more (1-&gt;4)-alpha-linked D-glucose units.. This is Alpha-amylase-related protein (Amyrel) from Drosophila ercepeae (Fruit fly).